The following is a 526-amino-acid chain: Probable lipid II flippase MurJ (526 aa).

14 consecutive transmembrane segments (helical) span residues 35–55, 58–78, 96–116, 137–157, 160–180, 190–210, 235–255, 281–301, 313–333, 362–382, 391–411, 415–435, 459–479, and 489–509; these read LMGT…PNLF, LFAE…HYSM, AIFT…ILGA, MFPY…LHSI, FVPS…SMYF, IAAA…QLIF, IIAL…NDLV, LLGI…SFHV, LITA…FVLF, WHSV…AFYA, IAGT…FIPL, GIAF…WMFL, LFSV…AYFF, and GVPL…LLLL.

Belongs to the MurJ/MviN family.

The protein localises to the cell inner membrane. It functions in the pathway cell wall biogenesis; peptidoglycan biosynthesis. In terms of biological role, involved in peptidoglycan biosynthesis. Transports lipid-linked peptidoglycan precursors from the inner to the outer leaflet of the cytoplasmic membrane. This Treponema pallidum (strain Nichols) protein is Probable lipid II flippase MurJ.